Here is a 1648-residue protein sequence, read N- to C-terminus: Histone transcription regulator 3 (1648 aa).

2 disordered regions span residues Asn301–Asn371 and Asp1597–Arg1630. At Thr302 the chain carries Phosphothreonine. Residue Ser304 is modified to Phosphoserine. Positions Glu339–Ser353 are enriched in basic and acidic residues. Positions Asp1597 to Gly1610 are enriched in polar residues. Residues Ser1611 to Ser1625 show a composition bias toward low complexity.

The protein belongs to the HIR3 family. In terms of assembly, component of the HIR complex, composed of HIR1, HIR2, HIR3 and HPC2. This complex may consist of one copy of HIR1 and HIR3 and two copies of HIR2 and HPC2. The HIR complex interacts with ASF1. Interacts with RTT106.

It is found in the nucleus. Its subcellular location is the chromosome. HIR1, HIR2 and HIR3 are repressors of histone gene transcription. They are required for the periodic repression of three of the four histone gene loci during cell cycle as well as for autogenous regulation of the HTA1-HTB1 locus by H2A and H2B. Also has a role in nucleosome assembly. The protein is Histone transcription regulator 3 (HIR3) of Saccharomyces cerevisiae (strain ATCC 204508 / S288c) (Baker's yeast).